We begin with the raw amino-acid sequence, 203 residues long: Holliday junction branch migration complex subunit RuvA (203 aa).

A domain I region spans residues 1 to 63 (MIGKLSGKID…EEHIHLYGFL (63 aa)). The interval 64–142 (TLEEKNFFNL…KISSGSVIIK (79 aa)) is domain II. Residues 143-149 (DSLNIKN) form a flexible linker region. The domain III stretch occupies residues 150–203 (ITPVASNEVIKALVNLGFSRFEAQNAVQGIIIQNPEISIDELIKTALKNRNAGL).

This sequence belongs to the RuvA family. Homotetramer. Forms an RuvA(8)-RuvB(12)-Holliday junction (HJ) complex. HJ DNA is sandwiched between 2 RuvA tetramers; dsDNA enters through RuvA and exits via RuvB. An RuvB hexamer assembles on each DNA strand where it exits the tetramer. Each RuvB hexamer is contacted by two RuvA subunits (via domain III) on 2 adjacent RuvB subunits; this complex drives branch migration. In the full resolvosome a probable DNA-RuvA(4)-RuvB(12)-RuvC(2) complex forms which resolves the HJ.

It is found in the cytoplasm. Functionally, the RuvA-RuvB-RuvC complex processes Holliday junction (HJ) DNA during genetic recombination and DNA repair, while the RuvA-RuvB complex plays an important role in the rescue of blocked DNA replication forks via replication fork reversal (RFR). RuvA specifically binds to HJ cruciform DNA, conferring on it an open structure. The RuvB hexamer acts as an ATP-dependent pump, pulling dsDNA into and through the RuvAB complex. HJ branch migration allows RuvC to scan DNA until it finds its consensus sequence, where it cleaves and resolves the cruciform DNA. The sequence is that of Holliday junction branch migration complex subunit RuvA from Rickettsia felis (strain ATCC VR-1525 / URRWXCal2) (Rickettsia azadi).